We begin with the raw amino-acid sequence, 410 residues long: Cytochrome P450 monooxygenase mpsF (410 aa).

Cysteine 355 is a binding site for heme.

This sequence belongs to the cytochrome P450 family. Heme serves as cofactor.

Its pathway is secondary metabolite biosynthesis. Cytochrome P450 monooxygenase; part of the gene cluster that mediates the biosynthesis of macrophasetins, 3-decalinoyltetramic acids (DTAs) which feature a tetramate (pyrrolidine-2,4-dione) unit connected to a decalin fragment and that have potent bioactivities. The PKS-NRPS mpsA together with its associated enoylreductase partner mpsG incorporate one unit of acetyl-CoA, seven units of malonyl-CoA, and one unit of L-alanine to assemble the linear tetramic acid intermediate corresponding to the backbone of macrophasetins. Without the Diels-Alderase mpsD, the mpsA/G product can undergo the non-enzymatic intramolecular Diels-Alder (IMDA) reaction to generate both macrophasetin A and macrophasetin B. Catalyzed by mpsD, the linear tetramic acid intermediate is thoroughly converted to macrophasetin A via the endo-IMDA reaction in a regioselective and stereoselective manner. Finally, the cytochrome P450 monooxygenase mpsF catalyzes the hydroxylation at C20 to yield the end product macrophasetin C. This is Cytochrome P450 monooxygenase mpsF from Macrophomina phaseolina (strain MS6) (Charcoal rot fungus).